A 509-amino-acid polypeptide reads, in one-letter code: Proto-oncogene tyrosine-protein kinase LCK (509 aa).

A lipid anchor (N-myristoyl glycine) is attached at glycine 2. Positions 2–72 (GCVCSSNPED…DNLVIALHSY (71 aa)) are interactions with CD4 and CD8. S-palmitoyl cysteine attachment occurs at residues cysteine 3 and cysteine 5. Residues 61 to 121 (LQDNLVIALH…PFNFVAKANS (61 aa)) form the SH3 domain. A Glycyl lysine isopeptide (Lys-Gly) (interchain with G-Cter in ubiquitin) cross-link involves residue lysine 99. Serine 102 bears the Phosphoserine mark. Positions 127–224 (WFFKNLSRKD…GLCTKLSRPC (98 aa)) constitute an SH2 domain. Residues 154-242 (RESESTAGSF…WWEDEWEVPR (89 aa)) form an interaction with PTPRH region. Threonine 159 is subject to Phosphothreonine. Serine 162 bears the Phosphoserine mark. At tyrosine 192 the chain carries Phosphotyrosine. Serine 194 bears the Phosphoserine mark. The 254-residue stretch at 245–498 (LKLVERLGAG…YLRSVLDDFF (254 aa)) folds into the Protein kinase domain. ATP contacts are provided by residues 251 to 259 (LGAGQFGEV) and lysine 273. Lysine 276 is covalently cross-linked (Glycyl lysine isopeptide (Lys-Gly) (interchain with G-Cter in ubiquitin)). Aspartate 364 (proton acceptor) is an active-site residue. Tyrosine 394 is modified (phosphotyrosine; by autocatalysis). Tyrosine 505 is subject to Phosphotyrosine.

Belongs to the protein kinase superfamily. Tyr protein kinase family. SRC subfamily. As to quaternary structure, binds to the cytoplasmic domain of cell surface receptors, such as AXL, CD2, CD4, CD5, CD8, CD44, CD45 and CD122. Also binds to effector molecules, such as PI4K, VAV1, RASA1, FYB1 and to other protein kinases including CDK1, RAF1, ZAP70 and SYK. Binds to phosphatidylinositol 3'-kinase (PI3K) from T-lymphocytes through its SH3 domain and to the tyrosine phosphorylated form of KHDRBS1/p70 through its SH2 domain. Interacts with SQSTM1. Interacts with phosphorylated LIME1. Interacts with CBLB and PTPRH. Interacts with RUNX3. Forms a signaling complex with EPHA1, PTK2B and PI3-KINASE; upon activation by EFNA1 which may regulate T-lymphocytes migration. Associates with ZAP70 and RHOH; these interactions allow LCK-mediated RHOH and CD3 subunit phosphorylations in presence of a functional ZAP70. Interacts with CEACAM1 (via cytoplasmic domain); mediates CEACAM1 phosphorylation resulting in PTPN6 recruitment that dephosphorylates TCR stimulation-induced CD247 and ZAP70. Interacts with FYB2. Interacts with CD160. Interacts with CD48. Autophosphorylated on Tyr-394, increasing enzymatic activity, this site is dephosphorylated by PTN22. Phosphorylated on Tyr-505 by CSK, decreasing activity. Dephosphorylated by PTPRC/CD45. Dephosphorylation at Tyr-394 by PTPN2 negatively regulates T-cells differentiation. Dephosphorylation at Tyr-394 by DUSP22 negatively regulates T-cell receptor signaling. In terms of processing, myristoylation is required prior to palmitoylation. Post-translationally, palmitoylation regulates association with the plasma membrane and could be mediated by ZDHHC2. 'Lys-63'-linked ubiquitinated at Lys-99 and Lys-276 by UBR2; this modification is required for autophosphorylation at Tyr-394.

It is found in the cell membrane. It localises to the cytoplasm. The protein localises to the cytosol. It catalyses the reaction L-tyrosyl-[protein] + ATP = O-phospho-L-tyrosyl-[protein] + ADP + H(+). With respect to regulation, the relative activities of the inhibitory tyrosine-protein kinase CSK and the activating tyrosine-protein phosphatase PTPRC/CD45 determine the level of LCK activity. These interactions allow rapid and efficient activation of LCK in response to TCR stimulation. Functionally, non-receptor tyrosine-protein kinase that plays an essential role in the selection and maturation of developing T-cells in the thymus and in the function of mature T-cells. Plays a key role in T-cell antigen receptor (TCR)-linked signal transduction pathways. Constitutively associated with the cytoplasmic portions of the CD4 and CD8 surface receptors. Association of the TCR with a peptide antigen-bound MHC complex facilitates the interaction of CD4 and CD8 with MHC class II and class I molecules, respectively, thereby recruiting the associated LCK protein to the vicinity of the TCR/CD3 complex. LCK then phosphorylates tyrosine residues within the immunoreceptor tyrosine-based activation motifs (ITAM) of the cytoplasmic tails of the TCR-gamma chains and CD3 subunits, initiating the TCR/CD3 signaling pathway. Once stimulated, the TCR recruits the tyrosine kinase ZAP70, that becomes phosphorylated and activated by LCK. Following this, a large number of signaling molecules are recruited, ultimately leading to lymphokine production. LCK also contributes to signaling by other receptor molecules. Associates directly with the cytoplasmic tail of CD2, which leads to hyperphosphorylation and activation of LCK. Also plays a role in the IL2 receptor-linked signaling pathway that controls the T-cell proliferative response. Binding of IL2 to its receptor results in increased activity of LCK. Is expressed at all stages of thymocyte development and is required for the regulation of maturation events that are governed by both pre-TCR and mature alpha beta TCR. Phosphorylates other substrates including RUNX3, PTK2B/PYK2, the microtubule-associated protein MAPT, RHOH or TYROBP. Interacts with UNC119; this interaction plays a crucial role in activation of LCK. The sequence is that of Proto-oncogene tyrosine-protein kinase LCK (Lck) from Rattus norvegicus (Rat).